Here is a 1137-residue protein sequence, read N- to C-terminus: Isoleucine--tRNA ligase (1137 aa).

The short motif at 50 to 60 (PSANGMPGIHH) is the 'HIGH' region element. A 'KMSKS' region motif is present at residues 688–692 (KMSKR). Lysine 691 provides a ligand contact to ATP.

The protein belongs to the class-I aminoacyl-tRNA synthetase family. IleS type 2 subfamily. As to quaternary structure, monomer. Zn(2+) serves as cofactor.

It localises to the cytoplasm. The catalysed reaction is tRNA(Ile) + L-isoleucine + ATP = L-isoleucyl-tRNA(Ile) + AMP + diphosphate. Its function is as follows. Catalyzes the attachment of isoleucine to tRNA(Ile). As IleRS can inadvertently accommodate and process structurally similar amino acids such as valine, to avoid such errors it has two additional distinct tRNA(Ile)-dependent editing activities. One activity is designated as 'pretransfer' editing and involves the hydrolysis of activated Val-AMP. The other activity is designated 'posttransfer' editing and involves deacylation of mischarged Val-tRNA(Ile). The protein is Isoleucine--tRNA ligase of Porphyromonas gingivalis (strain ATCC BAA-308 / W83).